The primary structure comprises 635 residues: BTB/POZ domain and ankyrin repeat-containing protein NPR2 (635 aa).

The BTB domain maps to 97–191 (SDADVDVADG…LYTGKLRPAP (95 aa)). Residues 138–152 (AAGGGGGGGGGGGER) are compositionally biased toward gly residues. The tract at residues 138 to 157 (AAGGGGGGGGGGGERTGGRP) is disordered. The C2HC NPR-type zinc finger occupies 194–208 (VVSCADPMCPHDSCP). 4 residues coordinate Zn(2+): C197, C202, H204, and C207. 3 ANK repeats span residues 317-347 (KRVR…TLDD), 349-376 (NALH…NLNL), and 380-409 (RGYT…AVSQ). A salicylic acid-binding core (SBC) region spans residues 439–576 (ESNKDRLCID…FLEDDLPDSP (138 aa)). R484 is a salicylate binding site.

The protein belongs to the plant 'ANKYRIN-BTB/POZ' family. 'NPR1-like' subfamily. In terms of assembly, interacts with NRR. Interacts with TGAL1 and TGAL11.

The protein resides in the nucleus. Its pathway is protein modification; protein ubiquitination. In terms of biological role, salicylic acid (SA)-binding substrate-specific adapter of an E3 ubiquitin-protein ligase complex (CUL3-RBX1-BTB) which mediates the ubiquitination and subsequent proteasomal degradation of target proteins. May be involved in regulating basal defense responses against pathogens, and may be involved in crosstalk between SA- and JA-dependent signaling pathways. Does not seem to be involved in defense response against the bacterial blight disease caused by Xanthomonas oryzae pv. oryzae (Xoo). Over-expression of NPR2/NH2 does not confer disease resistance to Xoo. This Oryza sativa subsp. japonica (Rice) protein is BTB/POZ domain and ankyrin repeat-containing protein NPR2.